A 463-amino-acid chain; its full sequence is tRNA-2-methylthio-N(6)-dimethylallyladenosine synthase (463 aa).

One can recognise an MTTase N-terminal domain in the interval 19 to 135 (RSYWITTFGC…LENLLGKVDL (117 aa)). 6 residues coordinate [4Fe-4S] cluster: C28, C64, C98, C170, C174, and C177. The region spanning 156–393 (RESSICGWVN…NALVEKTARN (238 aa)) is the Radical SAM core domain. The TRAM domain maps to 396-463 (QRYINNIESV…RPFSLTGELC (68 aa)).

Belongs to the methylthiotransferase family. MiaB subfamily. Monomer. Requires [4Fe-4S] cluster as cofactor.

Its subcellular location is the cytoplasm. It catalyses the reaction N(6)-dimethylallyladenosine(37) in tRNA + (sulfur carrier)-SH + AH2 + 2 S-adenosyl-L-methionine = 2-methylsulfanyl-N(6)-dimethylallyladenosine(37) in tRNA + (sulfur carrier)-H + 5'-deoxyadenosine + L-methionine + A + S-adenosyl-L-homocysteine + 2 H(+). In terms of biological role, catalyzes the methylthiolation of N6-(dimethylallyl)adenosine (i(6)A), leading to the formation of 2-methylthio-N6-(dimethylallyl)adenosine (ms(2)i(6)A) at position 37 in tRNAs that read codons beginning with uridine. The protein is tRNA-2-methylthio-N(6)-dimethylallyladenosine synthase of Prochlorococcus marinus (strain MIT 9312).